Here is a 616-residue protein sequence, read N- to C-terminus: Chaperone protein HtpG (616 aa).

The interval methionine 1 to arginine 333 is a; substrate-binding. Residues glutamate 334–lysine 542 are b. Positions isoleucine 543 to leucine 616 are c.

Belongs to the heat shock protein 90 family. Homodimer.

The protein localises to the cytoplasm. Functionally, molecular chaperone. Has ATPase activity. The sequence is that of Chaperone protein HtpG from Borreliella afzelii (strain PKo) (Borrelia afzelii).